The sequence spans 498 residues: Putrescine N-hydroxylase (498 aa).

FAD is bound by residues Phe-23, Asp-43, Lys-45, Trp-50, His-51, and Gln-62. 2 residues coordinate NADP(+): Gln-62 and Arg-104. Val-127 contributes to the FAD binding site. NADP(+) contacts are provided by Ser-207, Arg-231, Tyr-275, and Leu-309. FAD-binding residues include Asn-386, Pro-397, and Leu-399. Positions 443–474 are enriched in polar residues; the sequence is LESNTHSAVTPSKTRQGLNPSAKSVQQPSIEP. Residues 443 to 498 are disordered; the sequence is LESNTHSAVTPSKTRQGLNPSAKSVQQPSIEPQTALRIAPTGGNVSALMAPNKEAQ.

This sequence belongs to the lysine N(6)-hydroxylase/L-ornithine N(5)-oxygenase family. The cofactor is FAD.

The catalysed reaction is putrescine + NADPH + O2 = N-hydroxyputrescine + NADP(+) + H2O. It functions in the pathway siderophore biosynthesis. Functionally, N-hydroxylating monooxygenase involved in the biosynthesis of the siderophore putrebactin. Catalyzes the N-hydroxylation of the aliphatic diamine putrescine into N-hydroxyputrescine (NHP). In Shewanella oneidensis (strain ATCC 700550 / JCM 31522 / CIP 106686 / LMG 19005 / NCIMB 14063 / MR-1), this protein is Putrescine N-hydroxylase.